A 451-amino-acid chain; its full sequence is MSLAVVILAAGKGSRMNSNKPKVLQTLTGKTLIRHVLSRVEPLNPDNIIVVTGHLKEMVEADLADKKVTFVEQKEQLGTGHAVLQALPYIKEDKVLILYGDVPLISTDVLANLIKSASDDLAVLTAIVDNPTGLGRIIRDKFGAVSHIVEEKDATDGQRQIKEINTGMYCVAKSHLDDWLPNLGNTNAQGEYYLTDIVAMARGDNISITVTHPVEEFEIQGVNDRIQLAQLEREWQKHIAEVIMSKGVSVADPSRIDVRGKLEVGKDCWLDINVIIKGHVKLGNNVVIGANCILKNCTIEDNVKIKANSMVDGSIIREGAIVGPFARVRPECDVKEGAVIGNFVEAKKTILGRGSKASHLTYLGDSEIGANCNIGAGVITCNYDGVNKHKTTIGDYAFIGSDSQLIAPVNIGSGATIGAGSTIVSDVPADNLAISRARQRHIDTWQRPVKK.

Positions 1-225 (MSLAVVILAA…EFEIQGVNDR (225 aa)) are pyrophosphorylase. Residues 8-11 (LAAG), Lys22, Gln73, 78-79 (GT), 99-101 (YGD), Gly135, Glu150, Asn165, and Asn223 contribute to the UDP-N-acetyl-alpha-D-glucosamine site. Residue Asp101 participates in Mg(2+) binding. Mg(2+) is bound at residue Asn223. Residues 226 to 246 (IQLAQLEREWQKHIAEVIMSK) are linker. The segment at 247–451 (GVSVADPSRI…IDTWQRPVKK (205 aa)) is N-acetyltransferase. 2 residues coordinate UDP-N-acetyl-alpha-D-glucosamine: Arg329 and Lys347. The active-site Proton acceptor is the His359. 2 residues coordinate UDP-N-acetyl-alpha-D-glucosamine: Tyr362 and Asn373. Residues Ala376, 382–383 (NY), Ser401, Ala419, and Arg436 contribute to the acetyl-CoA site.

It in the N-terminal section; belongs to the N-acetylglucosamine-1-phosphate uridyltransferase family. This sequence in the C-terminal section; belongs to the transferase hexapeptide repeat family. In terms of assembly, homotrimer. The cofactor is Mg(2+).

The protein resides in the cytoplasm. It catalyses the reaction alpha-D-glucosamine 1-phosphate + acetyl-CoA = N-acetyl-alpha-D-glucosamine 1-phosphate + CoA + H(+). The catalysed reaction is N-acetyl-alpha-D-glucosamine 1-phosphate + UTP + H(+) = UDP-N-acetyl-alpha-D-glucosamine + diphosphate. Its pathway is nucleotide-sugar biosynthesis; UDP-N-acetyl-alpha-D-glucosamine biosynthesis; N-acetyl-alpha-D-glucosamine 1-phosphate from alpha-D-glucosamine 6-phosphate (route II): step 2/2. It participates in nucleotide-sugar biosynthesis; UDP-N-acetyl-alpha-D-glucosamine biosynthesis; UDP-N-acetyl-alpha-D-glucosamine from N-acetyl-alpha-D-glucosamine 1-phosphate: step 1/1. The protein operates within bacterial outer membrane biogenesis; LPS lipid A biosynthesis. In terms of biological role, catalyzes the last two sequential reactions in the de novo biosynthetic pathway for UDP-N-acetylglucosamine (UDP-GlcNAc). The C-terminal domain catalyzes the transfer of acetyl group from acetyl coenzyme A to glucosamine-1-phosphate (GlcN-1-P) to produce N-acetylglucosamine-1-phosphate (GlcNAc-1-P), which is converted into UDP-GlcNAc by the transfer of uridine 5-monophosphate (from uridine 5-triphosphate), a reaction catalyzed by the N-terminal domain. The chain is Bifunctional protein GlmU from Francisella philomiragia subsp. philomiragia (strain ATCC 25017 / CCUG 19701 / FSC 153 / O#319-036).